Reading from the N-terminus, the 790-residue chain is Phenylalanine--tRNA ligase beta subunit (790 aa).

Residues 39–154 (PDSLNTVVTG…ADTPLGESAC (116 aa)) enclose the tRNA-binding domain. The 80-residue stretch at 404 to 483 (FSPLSLSVRP…FVQKTQKILP (80 aa)) folds into the B5 domain. Residues D457, D463, E466, and E467 each contribute to the Mg(2+) site. Residues 694 to 790 (PIYPASSRDI…KLANIGQGNS (97 aa)) enclose the FDX-ACB domain.

This sequence belongs to the phenylalanyl-tRNA synthetase beta subunit family. Type 1 subfamily. Tetramer of two alpha and two beta subunits. Requires Mg(2+) as cofactor.

Its subcellular location is the cytoplasm. The catalysed reaction is tRNA(Phe) + L-phenylalanine + ATP = L-phenylalanyl-tRNA(Phe) + AMP + diphosphate + H(+). The protein is Phenylalanine--tRNA ligase beta subunit of Chlamydia trachomatis serovar A (strain ATCC VR-571B / DSM 19440 / HAR-13).